Here is a 329-residue protein sequence, read N- to C-terminus: Biotin synthase (329 aa).

A Radical SAM core domain is found at 48–278 (FVGDKVYLCS…SKKISVCGGR (231 aa)). Cys66, Cys70, and Cys73 together coordinate [4Fe-4S] cluster. Ser143 and Cys203 together coordinate [2Fe-2S] cluster.

The protein belongs to the radical SAM superfamily. Biotin synthase family. As to quaternary structure, homodimer. It depends on [4Fe-4S] cluster as a cofactor. The cofactor is [2Fe-2S] cluster.

The catalysed reaction is (4R,5S)-dethiobiotin + (sulfur carrier)-SH + 2 reduced [2Fe-2S]-[ferredoxin] + 2 S-adenosyl-L-methionine = (sulfur carrier)-H + biotin + 2 5'-deoxyadenosine + 2 L-methionine + 2 oxidized [2Fe-2S]-[ferredoxin]. It functions in the pathway cofactor biosynthesis; biotin biosynthesis; biotin from 7,8-diaminononanoate: step 2/2. Catalyzes the conversion of dethiobiotin (DTB) to biotin by the insertion of a sulfur atom into dethiobiotin via a radical-based mechanism. This Geotalea uraniireducens (strain Rf4) (Geobacter uraniireducens) protein is Biotin synthase.